The sequence spans 696 residues: Methionine--tRNA ligase (696 aa).

A 'HIGH' region motif is present at residues 12-22 (PYANGPLHLGH). Cysteine 143, cysteine 146, cysteine 156, and cysteine 159 together coordinate Zn(2+). Positions 330–334 (KMSKS) match the 'KMSKS' region motif. Lysine 333 is a binding site for ATP. Positions 593–696 (DFAKLDLRIG…AGAQPGMPVR (104 aa)) constitute a tRNA-binding domain.

It belongs to the class-I aminoacyl-tRNA synthetase family. MetG type 1 subfamily. As to quaternary structure, homodimer. The cofactor is Zn(2+).

The protein resides in the cytoplasm. It catalyses the reaction tRNA(Met) + L-methionine + ATP = L-methionyl-tRNA(Met) + AMP + diphosphate. Is required not only for elongation of protein synthesis but also for the initiation of all mRNA translation through initiator tRNA(fMet) aminoacylation. The protein is Methionine--tRNA ligase of Xanthomonas campestris pv. campestris (strain 8004).